A 948-amino-acid polypeptide reads, in one-letter code: MKEPSIVVKGARAHNLKDIDIELPKNKLIVMTGLSGSGKSSLAFDTIYAEGQRRYVESLSAYARQFLGQMDKPDVDTIEGLSPAISIDQKTTSKNPRSTVATVTEIYDYIRLLYARVGKPYCPNHNIEIESQTVQQMVDRIMELEARTKIQLLAPVIAHRKGSHEKLIEDIGKKGYVRLRIDGEIVDVNDVPTLDKNKNHTIEVVVDRLVVKDGIETRLADSIETALELSEGQLTVDVIDGEDLKFSESHACPICGFSIGELEPRMFSFNSPFGACPTCDGLGQKLTVDVDLVVPDKDKTLNEGAIEPWIPTSSDFYPTLLKRVCEVYKINMDKPFKKLTERQRDILLYGSGDKEIEFTFTQRQGGTRKRTMVFEGVVPNISRRFHESPSEYTREMMSKYMTELPCETCHGKRLSREALSVYVGGLNIGEVVEYSISQALNYYKNIDLSEQDQAIANQILKEIISRLTFLNNVGLEYLTLNRASGTLSGGEAQRIRLATQIGSRLTGVLYVLDEPSIGLHQRDNDRLINTLKEMRDLGNTLIVVEHDDDTMRAADYLVDIGPGAGEHGGQIVSSGTPQKVMKDKKSLTGQYLSGKKRIDVPEYRRPASDRKISIRGARSNNLKGIDVDIPLSIMTVVTGVSGSGKSSLVNEVLYKSLAQKINKSKVKPGLYDKIEGIDQLDKIIDIDQSPIGRTPRSNPATYTGVFDDIRDVFAQTNEAKIRGYQKGRFSFNVKGGRCEACKGDGIIKIEMHFLPDVYVPCEVCDGKRYNRETLEVTYKGKNIADILEMTVEEATQFFENIPKIKRKLQTLVDVGLGYVTLGQQATTLSGGEAQRVKLASELHKRSTGKSIYILDELTTGLHVDDISRLLKVLNRLVENGDTVVIIEHNLDVIKTADYIIDLGPEGGSGGGTIVATGTPEDIAQTKSSYTGKYLKEVLERDKQNTEDK.

33–40 (GLSGSGKS) is an ATP binding site. A C4-type zinc finger spans residues 252 to 279 (CPICGFSIGELEPRMFSFNSPFGACPTC). 2 consecutive ABC transporter domains span residues 309–587 (WIPT…KKSL) and 607–935 (ASDR…KYLK). 639–646 (GVSGSGKS) is a binding site for ATP. A C4-type zinc finger spans residues 738–764 (CEACKGDGIIKIEMHFLPDVYVPCEVC).

The protein belongs to the ABC transporter superfamily. UvrA family. Forms a heterotetramer with UvrB during the search for lesions.

It is found in the cytoplasm. In terms of biological role, the UvrABC repair system catalyzes the recognition and processing of DNA lesions. UvrA is an ATPase and a DNA-binding protein. A damage recognition complex composed of 2 UvrA and 2 UvrB subunits scans DNA for abnormalities. When the presence of a lesion has been verified by UvrB, the UvrA molecules dissociate. This chain is UvrABC system protein A, found in Staphylococcus aureus (strain N315).